A 137-amino-acid chain; its full sequence is Large-conductance mechanosensitive channel (137 aa).

Transmembrane regions (helical) follow at residues 9-29 (AFAV…GAAF) and 79-99 (IQTI…VKVI).

It belongs to the MscL family. As to quaternary structure, homopentamer.

Its subcellular location is the cell inner membrane. Its function is as follows. Channel that opens in response to stretch forces in the membrane lipid bilayer. May participate in the regulation of osmotic pressure changes within the cell. The sequence is that of Large-conductance mechanosensitive channel from Pseudomonas entomophila (strain L48).